Reading from the N-terminus, the 624-residue chain is MNSSTSSENVFINSFSYLNQTSQAVISGNSTFANVINFPYRLGLSFIGAVNLQYEQTVKSEEIPPTLRSVFDTIGFFFSPYAIFCFVIAIVLNRFVVFYAVLNNGSRRTLPLWLSNVFHVSAVVVLAMVSLGPLTLGKDFKILGDPAFAQEKFLLNIFYAFAYSYCVETIFTIMRNSSPLEGTDYSLFELSIQFYTMTNNNTKFLDSPDYIIDCSMAILSRILIHLVEIFRLRNYRLLFSTIMNLCHICYLGIRVKQGGWKSLPFSVKFRHFPKLFSVSIICLSLLIFKLSCLIRWDPFGKSRNSCELLQFYPLSRNWKKYLNYTGEEDFSAMATKFALLLCSGTELMEKGIRREFPAINIPDNVNEKFFISGYLNELSKPYKENTSISFPKKNSSILKQRFFLMFPKSIIWIMKKLVGQVFFGFRDNKDEDIPDNDPSKMLKITKTNSLNNSAGHKEDIELELLNTSDDEYSEDYEPSEVESLGDSDEENLEEDSLIFNETRDALLDLFSSEDNEVHTDYNWIMSTSRILQQKLLSDKTLTRASILDTKLSEVDETFGTESDFDLSCAVCKVNERNTVLWPCRCFAICEDCRISLGLRGFSTCVCCRSKVHGYCKVHPVSDSK.

Residues 1–69 lie on the Perinuclear space side of the membrane; the sequence is MNSSTSSENV…SEEIPPTLRS (69 aa). N-linked (GlcNAc...) asparagine glycosylation is found at Asn2, Asn19, and Asn29. Residues 70-90 form a helical membrane-spanning segment; that stretch reads VFDTIGFFFSPYAIFCFVIAI. The Nuclear portion of the chain corresponds to 91 to 116; that stretch reads VLNRFVVFYAVLNNGSRRTLPLWLSN. A helical membrane pass occupies residues 117-137; it reads VFHVSAVVVLAMVSLGPLTLG. The Perinuclear space portion of the chain corresponds to 138–152; it reads KDFKILGDPAFAQEK. A helical transmembrane segment spans residues 153–173; sequence FLLNIFYAFAYSYCVETIFTI. The Nuclear portion of the chain corresponds to 174–209; that stretch reads MRNSSPLEGTDYSLFELSIQFYTMTNNNTKFLDSPD. The chain crosses the membrane as a helical span at residues 210–230; the sequence is YIIDCSMAILSRILIHLVEIF. Residues 231 to 273 are Perinuclear space-facing; the sequence is RLRNYRLLFSTIMNLCHICYLGIRVKQGGWKSLPFSVKFRHFP. Residues 274–294 traverse the membrane as a helical segment; the sequence is KLFSVSIICLSLLIFKLSCLI. The Nuclear portion of the chain corresponds to 295 to 624; it reads RWDPFGKSRN…CKVHPVSDSK (330 aa). The disordered stretch occupies residues 467 to 490; sequence TSDDEYSEDYEPSEVESLGDSDEE. Residues 468-490 are compositionally biased toward acidic residues; the sequence is SDDEYSEDYEPSEVESLGDSDEE. An RING-type; atypical zinc finger spans residues 568–608; sequence CAVCKVNERNTVLWPCRCFAICEDCRISLGLRGFSTCVCCR.

Component of the Asi complex, which contains ASI1, ASI2 and ASI3. Interacts directly with ASI3. Glycosylation is not required for ASI1 function.

It is found in the nucleus inner membrane. The enzyme catalyses S-ubiquitinyl-[E2 ubiquitin-conjugating enzyme]-L-cysteine + [acceptor protein]-L-lysine = [E2 ubiquitin-conjugating enzyme]-L-cysteine + N(6)-ubiquitinyl-[acceptor protein]-L-lysine.. Its function is as follows. E3 ubiquitin-protein ligase which transfers ubiquitin to substrates promoting their degradation. Part of the nuclear inner membrane (INM)-specific branch of the ER-associated degradation (ERAD) pathway, required for the elimination of misfolded proteins in the INM, a specialized ER subdomain. Required for ERG11 degradation. Negative regulator of SPS-sensor signaling. Together with ASI2 and ASI3, prevents the unprocessed precursor forms of STP1 and STP2 that escape cytoplasmic anchoring from inducing SPS-sensor-regulated genes in the absence of inducing signals. Controls amino acid permease (AAP) gene expression in response to amino acid availability, a process mediated by the transcription factors STP1 and STP1. The protein is ERAD-associated E3 ubiquitin-protein ligase ASI1 (ASI1) of Saccharomyces cerevisiae (strain ATCC 204508 / S288c) (Baker's yeast).